The sequence spans 692 residues: Elongation factor G (692 aa).

The region spanning glutamate 8 to leucine 282 is the tr-type G domain. GTP is bound by residues alanine 17–threonine 24, aspartate 81–histidine 85, and asparagine 135–aspartate 138.

It belongs to the TRAFAC class translation factor GTPase superfamily. Classic translation factor GTPase family. EF-G/EF-2 subfamily.

The protein resides in the cytoplasm. Functionally, catalyzes the GTP-dependent ribosomal translocation step during translation elongation. During this step, the ribosome changes from the pre-translocational (PRE) to the post-translocational (POST) state as the newly formed A-site-bound peptidyl-tRNA and P-site-bound deacylated tRNA move to the P and E sites, respectively. Catalyzes the coordinated movement of the two tRNA molecules, the mRNA and conformational changes in the ribosome. This Bacillus cereus (strain ATCC 10987 / NRS 248) protein is Elongation factor G.